Reading from the N-terminus, the 951-residue chain is Valine--tRNA ligase (951 aa).

The 'HIGH' region signature appears at 42–52 (PNVTGSLHMGH). Residues 554–558 (KMSKS) carry the 'KMSKS' region motif. K557 serves as a coordination point for ATP. Positions 882–944 (LINKDDELAR…AEAKAKLIEQ (63 aa)) form a coiled coil.

This sequence belongs to the class-I aminoacyl-tRNA synthetase family. ValS type 1 subfamily. Monomer.

The protein localises to the cytoplasm. It carries out the reaction tRNA(Val) + L-valine + ATP = L-valyl-tRNA(Val) + AMP + diphosphate. Its function is as follows. Catalyzes the attachment of valine to tRNA(Val). As ValRS can inadvertently accommodate and process structurally similar amino acids such as threonine, to avoid such errors, it has a 'posttransfer' editing activity that hydrolyzes mischarged Thr-tRNA(Val) in a tRNA-dependent manner. The sequence is that of Valine--tRNA ligase from Salmonella choleraesuis (strain SC-B67).